Consider the following 118-residue polypeptide: Protein MT2260 (118 aa).

Belongs to the HesB/IscA family.

This is Protein MT2260 from Mycobacterium tuberculosis (strain CDC 1551 / Oshkosh).